We begin with the raw amino-acid sequence, 1410 residues long: DNA-directed RNA polymerase subunit beta' (1410 aa).

Zn(2+)-binding residues include cysteine 70, cysteine 72, cysteine 85, and cysteine 88. Aspartate 460, aspartate 462, and aspartate 464 together coordinate Mg(2+). Zn(2+) is bound by residues cysteine 814, cysteine 888, cysteine 895, and cysteine 898.

Belongs to the RNA polymerase beta' chain family. The RNAP catalytic core consists of 2 alpha, 1 beta, 1 beta' and 1 omega subunit. When a sigma factor is associated with the core the holoenzyme is formed, which can initiate transcription. It depends on Mg(2+) as a cofactor. The cofactor is Zn(2+).

The enzyme catalyses RNA(n) + a ribonucleoside 5'-triphosphate = RNA(n+1) + diphosphate. Its function is as follows. DNA-dependent RNA polymerase catalyzes the transcription of DNA into RNA using the four ribonucleoside triphosphates as substrates. The polypeptide is DNA-directed RNA polymerase subunit beta' (Buchnera aphidicola subsp. Cinara cedri (strain Cc)).